The chain runs to 130 residues: Small ribosomal subunit protein uS9 (130 aa).

It belongs to the universal ribosomal protein uS9 family.

The protein is Small ribosomal subunit protein uS9 of Pectobacterium carotovorum subsp. carotovorum (strain PC1).